We begin with the raw amino-acid sequence, 81 residues long: Photosystem I iron-sulfur center (81 aa).

4Fe-4S ferredoxin-type domains follow at residues 2–31 (SHSV…MVPW) and 37–68 (GQIA…VRVY). [4Fe-4S] cluster contacts are provided by Cys-11, Cys-14, Cys-17, Cys-21, Cys-48, Cys-51, Cys-54, and Cys-58.

The cyanobacterial PSI reaction center is composed of one copy each of PsaA,B,C,D,E,F,I,J,K,L,M and X, and forms trimeric complexes. [4Fe-4S] cluster is required as a cofactor.

It is found in the cellular thylakoid membrane. The enzyme catalyses reduced [plastocyanin] + hnu + oxidized [2Fe-2S]-[ferredoxin] = oxidized [plastocyanin] + reduced [2Fe-2S]-[ferredoxin]. Apoprotein for the two 4Fe-4S centers FA and FB of photosystem I (PSI); essential for photochemical activity. FB is the terminal electron acceptor of PSI, donating electrons to ferredoxin. The C-terminus interacts with PsaA/B/D and helps assemble the protein into the PSI complex. Required for binding of PsaD and PsaE to PSI. PSI is a plastocyanin/cytochrome c6-ferredoxin oxidoreductase, converting photonic excitation into a charge separation, which transfers an electron from the donor P700 chlorophyll pair to the spectroscopically characterized acceptors A0, A1, FX, FA and FB in turn. This Trichodesmium erythraeum (strain IMS101) protein is Photosystem I iron-sulfur center.